The sequence spans 368 residues: Flagellar P-ring protein (368 aa).

A signal peptide spans 1–24 (MDKPMKRIFVVLVILLVLPQLALA).

The protein belongs to the FlgI family. In terms of assembly, the basal body constitutes a major portion of the flagellar organelle and consists of four rings (L,P,S, and M) mounted on a central rod.

It is found in the periplasm. The protein resides in the bacterial flagellum basal body. In terms of biological role, assembles around the rod to form the L-ring and probably protects the motor/basal body from shearing forces during rotation. In Geobacter sulfurreducens (strain ATCC 51573 / DSM 12127 / PCA), this protein is Flagellar P-ring protein.